Reading from the N-terminus, the 171-residue chain is Small ribosomal subunit protein uS13 (171 aa).

Residues 128-171 form a disordered region; it reads HERGQKVRGQRTKSTGRTEGTIGVNVEAIKEEQAEDDAADGGEE. Over residues 160-171 the composition is skewed to acidic residues; it reads QAEDDAADGGEE.

Belongs to the universal ribosomal protein uS13 family. Part of the 30S ribosomal subunit. Forms a loose heterodimer with protein S19. Forms two bridges to the 50S subunit in the 70S ribosome.

Located at the top of the head of the 30S subunit, it contacts several helices of the 16S rRNA. In the 70S ribosome it contacts the 23S rRNA (bridge B1a) and protein L5 of the 50S subunit (bridge B1b), connecting the 2 subunits; these bridges are implicated in subunit movement. The sequence is that of Small ribosomal subunit protein uS13 from Halobacterium salinarum (strain ATCC 700922 / JCM 11081 / NRC-1) (Halobacterium halobium).